The sequence spans 1183 residues: LRR receptor-like serine/threonine-protein kinase FLS2 (1183 aa).

A signal peptide spans 1–41 (MERNKFASKMSQHYTKTICIAVVLVAVLFSLSSAAAAGSGA). Over 42–809 (AVSVQLEALL…GKKRVFSRTG (768 aa)) the chain is Extracellular. Cys87 and Cys94 are disulfide-bonded. N-linked (GlcNAc...) asparagine glycans are attached at residues Asn88 and Asn120. LRR repeat units lie at residues 97–120 (AGQV…FLGN), 121–145 (ISTL…LGRL), 147–169 (ELEQ…LCNC), 171–193 (AMWA…IGDL), 194–217 (SNLE…MAKL), 218–241 (KGIM…IGDL), 242–265 (SNLQ…LGRC), 267–289 (NLTL…LGEL), 290–313 (TNLE…LRRC), 315–337 (SLLN…LGEL), 338–361 (PSLQ…LTNL), 363–385 (NLTI…IGSL), and 386–409 (RNLR…ISNC). Cysteines 167 and 189 form a disulfide. Asn168 and Asn181 each carry an N-linked (GlcNAc...) asparagine glycan. The N-linked (GlcNAc...) asparagine glycan is linked to Asn267. N-linked (GlcNAc...) asparagine glycosylation is found at Asn363, Asn395, Asn408, and Asn414. LRR repeat units follow at residues 433 to 457 (LQSL…LFDC), 459 to 480 (QLQK…LVGQ), 481 to 505 (LGNL…IGNM), 507 to 529 (KLIS…ISNM), 530 to 553 (SSLQ…VFEL), 555 to 577 (QLTI…VANL), 578 to 600 (RSLS…ALGR), 601 to 625 (LDQL…VIAS), 627 to 651 (SNVQ…IGGL), 652 to 675 (VMVQ…LAGC), 676 to 699 (KNLY…LFPQ), 701 to 724 (DLLT…IAAL), 725 to 748 (KHIQ…LANL), and 749 to 773 (TALR…VFRN). N-linked (GlcNAc...) asparagine glycans are attached at residues Asn483, Asn504, and Asn528. A glycan (N-linked (GlcNAc...) asparagine) is linked at Asn591. N-linked (GlcNAc...) asparagine glycosylation is present at Asn634. Asn707, Asn747, Asn755, and Asn773 each carry an N-linked (GlcNAc...) asparagine glycan. Residues 810–830 (LVILVVLIALSTLLLLMVATI) traverse the membrane as a helical segment. Topologically, residues 831–1183 (LLVSYRRYRR…LKMSKLVGED (353 aa)) are cytoplasmic. One can recognise a Protein kinase domain in the interval 876 to 1179 (FDQGNVIGSS…LSSLLKMSKL (304 aa)). ATP is bound by residues 882–890 (IGSSNLSTV) and Lys908. The active-site Proton acceptor is the Asp1013.

Belongs to the protein kinase superfamily. Ser/Thr protein kinase family. Interacts with SERK2.

The protein localises to the cell membrane. It carries out the reaction L-seryl-[protein] + ATP = O-phospho-L-seryl-[protein] + ADP + H(+). The enzyme catalyses L-threonyl-[protein] + ATP = O-phospho-L-threonyl-[protein] + ADP + H(+). Its function is as follows. Constitutes the pattern-recognition receptor (PPR) that determines the specific perception of flagellin (flg22), a potent elicitor of the defense response to pathogen-associated molecular patterns (PAMPs). Recognizes flg22 from Pseudomonas aeruginosa and Acidovorax avenae. flg22 is a peptide derived from the bacterial flagellin N-terminus sequence. Does not recognize flg22 from Xanthomonas oryzae pv. oryzae (Xoo) or Xanthomonas oryzae pv. oryzicola (Xoc). The chain is LRR receptor-like serine/threonine-protein kinase FLS2 from Oryza sativa subsp. japonica (Rice).